The following is a 488-amino-acid chain: Germacrene A hydroxylase (488 aa).

The Cytoplasmic portion of the chain corresponds to 1–6 (MELSLT). The chain crosses the membrane as a helical; Signal-anchor for type II membrane protein span at residues 7–23 (TSIALATIVLILYKLAT). Over 24–488 (RPKSNKKRLP…KTELILVPSF (465 aa)) the chain is Lumenal. N-linked (GlcNAc...) asparagine glycans are attached at residues asparagine 260 and asparagine 379. Position 432 (cysteine 432) interacts with heme.

The protein belongs to the cytochrome P450 family. Heme is required as a cofactor.

The protein resides in the endoplasmic reticulum membrane. Its subcellular location is the microsome membrane. The catalysed reaction is (+)-(R)-germacrene A + 3 reduced [NADPH--hemoprotein reductase] + 3 O2 = germacra-1(10),4,11(13)-trien-12-oate + 3 oxidized [NADPH--hemoprotein reductase] + 4 H2O + 4 H(+). It functions in the pathway secondary metabolite biosynthesis; terpenoid biosynthesis. Its activity is regulated as follows. Inhibited by cytochrome C, miconazole, aminobenzotriazole, metyrapone and clotrimazole. Its function is as follows. Involved in the biosynthesis of germacrene-derived sesquiterpene lactones. Catalyzes three consecutive oxidations of germacrene A to produce germacrene A acid. Could also catalyze the three-step oxidation of non-natural substrate amorphadiene to artemisinic acid. Can use beta-elemene as substrate. The chain is Germacrene A hydroxylase from Cichorium intybus (Chicory).